The sequence spans 365 residues: Probable L-tyrosine/L-aspartate decarboxylase (365 aa).

Residue Lys224 is modified to N6-(pyridoxal phosphate)lysine.

This sequence belongs to the group II decarboxylase family. MfnA subfamily. Requires pyridoxal 5'-phosphate as cofactor.

It carries out the reaction L-tyrosine + H(+) = tyramine + CO2. The catalysed reaction is L-aspartate + H(+) = beta-alanine + CO2. It participates in cofactor biosynthesis; methanofuran biosynthesis. It functions in the pathway cofactor biosynthesis; coenzyme A biosynthesis. Catalyzes the decarboxylation of L-tyrosine to produce tyramine for methanofuran biosynthesis. Can also catalyze the decarboxylation of L-aspartate to produce beta-alanine for coenzyme A (CoA) biosynthesis. The chain is Probable L-tyrosine/L-aspartate decarboxylase from Methanoculleus marisnigri (strain ATCC 35101 / DSM 1498 / JR1).